The sequence spans 339 residues: Putative clathrin assembly protein At1g14686 (339 aa).

The 133-residue stretch at serine 16–arginine 148 folds into the ENTH domain. The segment at glutamate 283 to threonine 307 is disordered. Positions alanine 295–isoleucine 305 are enriched in acidic residues.

It is found in the membrane. It localises to the clathrin-coated pit. The protein resides in the golgi apparatus. The protein localises to the cytoplasmic vesicle. Its subcellular location is the clathrin-coated vesicle. The chain is Putative clathrin assembly protein At1g14686 from Arabidopsis thaliana (Mouse-ear cress).